The following is a 505-amino-acid chain: MAMENPFEGKEIWFGVGSQDLYGEEALRQVAQQSAEIVDSLNASGRIPVKLVLKPTLKSSDGVRRFMVDASADDSCIGVITWMHTFSPAKMWIRGLEALRKPLLQLNTQHHFEIPWETIDMDFMNLNQAAHGDREYGYIVTRLGIPRKIVVGHYTDPAVADKIGVWARACAGWQASNTMNVMRWGDNMRNVAVTEGDKTEAERVFGASINTWAVNELVAAYDAVKENQIKDLIEDYKAKYEIAPELLDKDYDSLFIAAREECAMVNMMRANGCTAGVDNFEDLGALPQLPGVGPQRFPSEYGWGFSAEGDWKTAVLVRIGAVMGYGLEGGASLMEDYSYNFTPGNEMIMGSHMLEVSPSVGTIAKPRLEIHPLGIGGKADPVRLVFTVAPKKDAVVVSLADVRTRFRMLMNVVDVVEPLGSLDKLPCARALWKPEPNLEISAECWLRAGGSHHTCMTTSVGREAWEDFARIAGVELAAIDAETTPREFERELEIEDVFHELANRH.

4 residues coordinate Mn(2+): glutamate 308, glutamate 335, histidine 352, and histidine 453.

Belongs to the arabinose isomerase family. It depends on Mn(2+) as a cofactor.

The catalysed reaction is beta-L-arabinopyranose = L-ribulose. The protein operates within carbohydrate degradation; L-arabinose degradation via L-ribulose; D-xylulose 5-phosphate from L-arabinose (bacterial route): step 1/3. Its function is as follows. Catalyzes the conversion of L-arabinose to L-ribulose. The sequence is that of L-arabinose isomerase from Bifidobacterium animalis subsp. lactis (strain AD011).